Consider the following 335-residue polypeptide: Pharynx and intestine in excess protein 1 (335 aa).

A Glycyl lysine isopeptide (Lys-Gly) (interchain with G-Cter in SUMO) cross-link involves residue Lys-68. Residues 98–126 (EYKTRLCDAFRREGYCPYNDNCTYAHGQD) form a C3H1-type 1 zinc finger. Positions 130–156 (VPRRRQEYYSRDPPRERRDSRSRRDDV) are enriched in basic and acidic residues. Positions 130 to 188 (VPRRRQEYYSRDPPRERRDSRSRRDDVDTTINRSSSSASKHHDENRRPSNNHGSSNRRQ) are disordered. Polar residues-rich tracts occupy residues 158–167 (TTINRSSSSA) and 177–187 (PSNNHGSSNRR). The C3H1-type 2 zinc-finger motif lies at 184–211 (SNRRQICHNFERGNCRYGPRCRFIHVEQ). The interval 288-291 (MAPT) is required for inhibition of Ser-2 phosphorylation.

Interacts with hda-1, let-418 and mep-1. Interacts (via C terminus) with cit-1.1 (via C terminus). In terms of processing, sumoylated in adult germ cells.

It localises to the nucleus. The protein resides in the cytoplasm. It is found in the cytoskeleton. The protein localises to the microtubule organizing center. Its subcellular location is the centrosome. It localises to the spindle. The protein resides in the cytoplasmic granule. In terms of biological role, maternally provided pie-1 is required for germline cell fate determination. Functions as a repressor of RNA polymerase II-dependent gene expression in the developing germline. Required for expression of nos-2 in P4 germline blastomere cells. Inhibits the histone deacetylase activity of hda-1. Represses transcriptional activation of cdk-9 and cit-1.1, which are members of the P-TEFb complex. Acts redundantly with gei-17 to promote piRNA-mediated silencing and fertility in adult germline. Promotes the sumoylation of hda-1 in adult animals but not in embryos thereby regulating its interaction with mep-1. This Caenorhabditis elegans protein is Pharynx and intestine in excess protein 1.